Here is a 349-residue protein sequence, read N- to C-terminus: Hepatic sodium/bile acid cotransporter (349 aa).

Over 1-22 the chain is Extracellular; the sequence is MEAHNASAPFNFTLPPNFGKRP. 2 N-linked (GlcNAc...) asparagine glycosylation sites follow: asparagine 5 and asparagine 11. Residues 23–44 traverse the membrane as a helical segment; that stretch reads TDLALSVILVFMLFFIMLSLGC. The Cytoplasmic segment spans residues 45-47; sequence TME. A helical transmembrane segment spans residues 48–83; it reads FSKIKAHLWKPKGLAIALVAQYGIMPLTAFVLGKVF. The Extracellular segment spans residues 84-86; sequence RLK. Residues 87–112 traverse the membrane as a discontinuously helical segment; the sequence is NIEALAILVCGCSPGGNLSNVFSLAM. Residues 113–115 are Cytoplasmic-facing; it reads KGD. A helical membrane pass occupies residues 116 to 142; the sequence is MNLSIVMTTCSTFCALGMMPLLLYIYS. The Extracellular portion of the chain corresponds to 143-156; sequence RGIYDGDLKDKVPY. Residues 157-179 form a helical membrane-spanning segment; that stretch reads KGIVISLVLVLIPCTIGIVLKSK. At 180 to 183 the chain is on the cytoplasmic side; sequence RPQY. A helical membrane pass occupies residues 184–217; it reads MRYVIKGGMIIILLCSVAVTVLSAINVGKSIMFA. Residues 218-219 are Extracellular-facing; the sequence is MT. Residues 220–243 traverse the membrane as a helical segment; it reads PLLIATSSLMPFIGFLLGYVLSAL. Over 244–247 the chain is Cytoplasmic; it reads FCLN. A discontinuously helical transmembrane segment spans residues 248 to 273; it reads GRCRRTVSMETGCQNVQLCSTILNVA. Residues 274 to 280 lie on the Extracellular side of the membrane; the sequence is FPPEVIG. The helical transmembrane segment at 281 to 311 threads the bilayer; it reads PLFFFPLLYMIFQLGEGLLLIAIFWCYEKFK. The Cytoplasmic segment spans residues 312–349; sequence TPKDKTKMIYTAATTEETIPGALGNGTYKGEDCSPCTA.

This sequence belongs to the bile acid:sodium symporter (BASS) (TC 2.A.28) family. As to quaternary structure, (Microbial infection) Interacts with the myristoylated pre-S1 domain of hepatitis B virus large envelope protein; myristoylation is essential for this interaction. As to expression, expressed in liver. Expressed in placental trophoblasts.

The protein localises to the cell membrane. The enzyme catalyses taurocholate(out) + 2 Na(+)(out) = taurocholate(in) + 2 Na(+)(in). It carries out the reaction cholate(out) + 2 Na(+)(out) = cholate(in) + 2 Na(+)(in). The catalysed reaction is estrone 3-sulfate(out) + 2 Na(+)(out) = estrone 3-sulfate(in) + 2 Na(+)(in). It catalyses the reaction taurochenodeoxycholate(out) + 2 Na(+)(out) = taurochenodeoxycholate(in) + 2 Na(+)(in). The enzyme catalyses tauroursodeoxycholate(out) + 2 Na(+)(out) = tauroursodeoxycholate(in) + 2 Na(+)(in). It carries out the reaction glycocholate(out) + 2 Na(+)(out) = glycocholate(in) + 2 Na(+)(in). The catalysed reaction is tauronorcholate(out) + 2 Na(+)(out) = tauronorcholate(in) + 2 Na(+)(in). It catalyses the reaction taurodeoxycholate(out) + 2 Na(+)(out) = taurodeoxycholate(in) + 2 Na(+)(in). The enzyme catalyses tauroallocholate(out) + 2 Na(+)(out) = tauroallocholate(in) + 2 Na(+)(in). It carries out the reaction taurohyodeoxycholate(out) + 2 Na(+)(out) = taurohyodeoxycholate(in) + 2 Na(+)(in). The catalysed reaction is taurohyocholate(out) + 2 Na(+)(out) = taurohyocholate(in) + 2 Na(+)(in). It catalyses the reaction tauro-beta-muricholate(out) + 2 Na(+)(out) = tauro-beta-muricholate(in) + 2 Na(+)(in). With respect to regulation, the transport of bile acids is sodium-dependent. In terms of biological role, as a major transporter of conjugated bile salts from plasma into the hepatocyte, it plays a key role in the enterohepatic circulation of bile salts necessary for the solubilization and absorption of dietary fat and fat-soluble vitamins. It is strictly dependent on the extracellular presence of sodium. It exhibits broad substrate specificity and transports various bile acids, such as taurocholate, cholate, as well as non-bile acid organic compounds, such as estrone sulfate. Works collaboratively with the ileal transporter (NTCP2), the organic solute transporter (OST), and the bile salt export pump (BSEP), to ensure efficacious biological recycling of bile acids during enterohepatic circulation. Functionally, (Microbial infection) Acts as an entry receptor for hepatitis B virus (HBV). The recognition for human SLC10A1/NTCP is highly specific. This is Hepatic sodium/bile acid cotransporter (SLC10A1) from Homo sapiens (Human).